A 288-amino-acid polypeptide reads, in one-letter code: GCN5-related N-acetyltransferase 6, chloroplastic (288 aa).

Residues 1–111 (MSTISIHRTE…YWTAAWLRAE (111 aa)) constitute a chloroplast transit peptide. The N-acetyltransferase domain occupies 151 to 288 (SCIVAVKKEE…DDTYLLQYTS (138 aa)). Residues 215–217 (LCV), 223–228 (RQGIAC), 254–256 (NSV), and Y261 each bind acetyl-CoA. Y261 acts as the Proton donor in catalysis.

This sequence belongs to the acetyltransferase family. GNAT subfamily. In terms of assembly, oligomer. Post-translationally, autoacetylated. Expressed in green tissues and in roots.

It is found in the plastid. Its subcellular location is the chloroplast. It localises to the cytoplasm. The protein localises to the perinuclear region. It carries out the reaction an N-terminal L-alpha-aminoacyl-[protein] + acetyl-CoA = N-terminal N(alpha)-acetyl-L-alpha-aminoacyl-[protein] + CoA + H(+). The enzyme catalyses L-lysyl-[protein] + acetyl-CoA = N(6)-acetyl-L-lysyl-[protein] + CoA + H(+). It catalyses the reaction N-terminal L-alanyl-[protein] + acetyl-CoA = N-terminal N(alpha)-acetyl-L-alanyl-[protein] + CoA + H(+). The catalysed reaction is N-terminal L-seryl-[protein] + acetyl-CoA = N-terminal N(alpha)-acetyl-L-seryl-[protein] + CoA + H(+). It carries out the reaction N-terminal L-threonyl-[protein] + acetyl-CoA = N-terminal N(alpha)-acetyl-L-threonyl-[protein] + CoA + H(+). The enzyme catalyses N-terminal L-methionyl-[protein] + acetyl-CoA = N-terminal N(alpha)-acetyl-L-methionyl-[protein] + CoA + H(+). It catalyses the reaction N-terminal L-valyl-[protein] + acetyl-CoA = N-terminal N(alpha)-acetyl-L-valyl-[protein] + CoA + H(+). In terms of biological role, protein acetyltransferase with dual specificity triggering both N-alpha-acetylation (NTA), with a large spectrum of modified N-termini, including methionine, alanine, serine, threonine and to a lower extent valine as substrates, and epsilon-lysine acetylation (KA). In Arabidopsis thaliana (Mouse-ear cress), this protein is GCN5-related N-acetyltransferase 6, chloroplastic.